The following is a 392-amino-acid chain: Nucleosome assembly protein 1-like 1-A (392 aa).

The disordered stretch occupies residues 1–37 (MANIDNKGQTELDQQDMEDVEDVEEEETGEDANSKAR). Positions 13 to 30 (DQQDMEDVEDVEEEETGE) are enriched in acidic residues. Positions 126 to 150 (YEPTEEECEWKVEEEDISGDLKEKA) match the NAP1L motif motif. The Nuclear localization signal motif lies at 273-279 (IKKKQKH). The segment covering 346-377 (AIEDDDDDYDEEGEEADDEEGEEEADEDNDPD) has biased composition (acidic residues). The disordered stretch occupies residues 346-392 (AIEDDDDDYDEEGEEADDEEGEEEADEDNDPDYEPKKGQNPAECKQQ).

It belongs to the nucleosome assembly protein (NAP) family. Forms homomultimers. Interacts with histone B4. Interacts with the B-type cyclins ccnb1 and ccnb2. Post-translationally, phosphorylated by cyclin B-cdc2 kinase complexes. As to expression, initially expressed throughout the embryo with expression higher at the animal pole. Becomes localized to presumptive ectoderm by gastrula stages. By stage 18 (neurula), expressed in the neural plate and posterior to the cement gland. In late neurula/early tailbud stages, expressed in the neural crest, neural tube, eyes, tailbud and ventral blood islands. Adult expression is predominantly in ovaries.

The protein localises to the cytoplasm. It is found in the nucleus. Acts as a chaperone for the linker histone to facilitate deposition of histone B4 onto linker DNA. Required for both remodeling of sperm chromatin into nucleosomes, and linker histone binding to nucleosome core dimers. Plays a role in tissue-specific gene regulation. Required for primitive hemopoiesis, acting upstream of tal1/scl. The sequence is that of Nucleosome assembly protein 1-like 1-A (nap1l1-a) from Xenopus laevis (African clawed frog).